A 340-amino-acid chain; its full sequence is GTPase Obg (340 aa).

Residues 1 to 158 enclose the Obg domain; it reads MSFIDEAKVY…KYITLKLKII (158 aa). One can recognise an OBG-type G domain in the interval 159–325; sequence SDIGIIGLPN…LSTLIQYIHK (167 aa). GTP-binding positions include 165-172, 190-194, 211-214, 278-281, and 306-308; these read GLPNAGKS, FTTLE, DIPG, NKSD, and SSI. Residues Ser172 and Thr192 each contribute to the Mg(2+) site.

This sequence belongs to the TRAFAC class OBG-HflX-like GTPase superfamily. OBG GTPase family. As to quaternary structure, monomer. Mg(2+) serves as cofactor.

The protein localises to the cytoplasm. Its function is as follows. An essential GTPase which binds GTP, GDP and possibly (p)ppGpp with moderate affinity, with high nucleotide exchange rates and a fairly low GTP hydrolysis rate. Plays a role in control of the cell cycle, stress response, ribosome biogenesis and in those bacteria that undergo differentiation, in morphogenesis control. The protein is GTPase Obg of Ehrlichia chaffeensis (strain ATCC CRL-10679 / Arkansas).